Reading from the N-terminus, the 283-residue chain is Pantothenate synthetase (283 aa).

Position 31 to 38 (31 to 38 (MGALHDGH)) interacts with ATP. His38 (proton donor) is an active-site residue. Gln62 lines the (R)-pantoate pocket. Gln62 lines the beta-alanine pocket. 148-151 (GKKD) is an ATP binding site. (R)-pantoate is bound at residue Gln154. Residues Val177 and 185 to 188 (KSSR) each bind ATP.

It belongs to the pantothenate synthetase family. In terms of assembly, homodimer.

It localises to the cytoplasm. The enzyme catalyses (R)-pantoate + beta-alanine + ATP = (R)-pantothenate + AMP + diphosphate + H(+). Its pathway is cofactor biosynthesis; (R)-pantothenate biosynthesis; (R)-pantothenate from (R)-pantoate and beta-alanine: step 1/1. Functionally, catalyzes the condensation of pantoate with beta-alanine in an ATP-dependent reaction via a pantoyl-adenylate intermediate. In Staphylococcus aureus (strain MRSA252), this protein is Pantothenate synthetase.